The primary structure comprises 147 residues: uncharacterized protein (147 aa).

The protein to M.jannaschii MJ1086 N-terminal region.

This is an uncharacterized protein from Methanocaldococcus jannaschii (strain ATCC 43067 / DSM 2661 / JAL-1 / JCM 10045 / NBRC 100440) (Methanococcus jannaschii).